The sequence spans 351 residues: MGHRKLASPRRGSAGLRPRKRSSELLPTPRTWPQINSQNPKLLGFVGYKVGMTHVFMIDDWPNSPTNGKEIYMPVTVLEVPPIIPLALRAYAIDGKGEPNVITEYWSSSSLQFLDITRRIHSISSFLKDDESKKKFDERFNTKLDLIKSNLDRIVYFRLLVSTQPRKIPSLGKKAPDLVEIQIGGGEKKSQLDYALNILGKEITIRDVFKEGQLIDVVGVTKGKGFAGVIKRYSVVELPRWHKHRKGSRKIGTRGPSLGTPSYTPQPGQLGFHRRTEYNKRIIKIGDEPKEINPAGGFVRYGIVRNTYVLLEGSILGSKKRPIFLREPVRPSYVFENPPKITYVNLLSQQG.

Disordered stretches follow at residues 1–31 (MGHR…TPRT) and 246–271 (KGSR…GQLG).

The protein belongs to the universal ribosomal protein uL3 family. In terms of assembly, part of the 50S ribosomal subunit. Forms a cluster with proteins L14 and L24e.

Its function is as follows. One of the primary rRNA binding proteins, it binds directly near the 3'-end of the 23S rRNA, where it nucleates assembly of the 50S subunit. The chain is Large ribosomal subunit protein uL3 from Saccharolobus solfataricus (strain ATCC 35092 / DSM 1617 / JCM 11322 / P2) (Sulfolobus solfataricus).